The following is a 602-amino-acid chain: Elongation factor 4 (602 aa).

The tr-type G domain occupies 7-189; sequence DKIRNFSIVA…AIVTRLPPPK (183 aa). GTP-binding positions include 19–24 and 136–139; these read DHGKST and NKVD.

This sequence belongs to the TRAFAC class translation factor GTPase superfamily. Classic translation factor GTPase family. LepA subfamily.

It is found in the cell inner membrane. The catalysed reaction is GTP + H2O = GDP + phosphate + H(+). Functionally, required for accurate and efficient protein synthesis under certain stress conditions. May act as a fidelity factor of the translation reaction, by catalyzing a one-codon backward translocation of tRNAs on improperly translocated ribosomes. Back-translocation proceeds from a post-translocation (POST) complex to a pre-translocation (PRE) complex, thus giving elongation factor G a second chance to translocate the tRNAs correctly. Binds to ribosomes in a GTP-dependent manner. In Caulobacter vibrioides (strain NA1000 / CB15N) (Caulobacter crescentus), this protein is Elongation factor 4.